A 253-amino-acid chain; its full sequence is MELKKLMEHISIIPDYRQAWKVEHKLSDILLLTICAVISGAEGWEDIEDFGETHPDFLKQYGDFENGIPVHDTIARVVSCICPAKFHESFINWMLDYHSSDDKDVIAIDGKIHRHSYDKSRRKGAIHVISAFSTMHSLVIGQIKTDKKSNEITAIPELLNMLDIKGKIIKTDAMGCQKDIAEKIQKQGGDYLFAVKGNQGRLNKAFEEKFPLKELNNPKHDSYAISEKSHGREETRLHIVCDVPDELIDFTFE.

Belongs to the transposase 11 family.

The protein is H repeat-associated putative transposase YbfD (ybfD) of Escherichia coli (strain K12).